The chain runs to 156 residues: Aspartate carbamoyltransferase regulatory chain (156 aa).

4 residues coordinate Zn(2+): C110, C115, C140, and C143.

This sequence belongs to the PyrI family. As to quaternary structure, contains catalytic and regulatory chains. Zn(2+) is required as a cofactor.

In terms of biological role, involved in allosteric regulation of aspartate carbamoyltransferase. This Methanocella arvoryzae (strain DSM 22066 / NBRC 105507 / MRE50) protein is Aspartate carbamoyltransferase regulatory chain.